Consider the following 406-residue polypeptide: 3-oxoacyl-[acyl-carrier-protein] synthase 1 (406 aa).

The Ketosynthase family 3 (KS3) domain maps to 1–403 (MRRTVITGFG…GTNATLIFKR (403 aa)). Catalysis depends on for beta-ketoacyl synthase activity residues C162, H297, and H332.

The protein belongs to the thiolase-like superfamily. Beta-ketoacyl-ACP synthases family. In terms of assembly, homodimer.

It is found in the cytoplasm. The catalysed reaction is a fatty acyl-[ACP] + malonyl-[ACP] + H(+) = a 3-oxoacyl-[ACP] + holo-[ACP] + CO2. It catalyses the reaction (3Z)-decenoyl-[ACP] + malonyl-[ACP] + H(+) = 3-oxo-(5Z)-dodecenoyl-[ACP] + holo-[ACP] + CO2. It participates in lipid metabolism; fatty acid biosynthesis. In terms of biological role, involved in the type II fatty acid elongation cycle. Catalyzes the elongation of a wide range of acyl-ACP by the addition of two carbons from malonyl-ACP to an acyl acceptor. Can also use unsaturated fatty acids. Catalyzes a key reaction in unsaturated fatty acid (UFA) synthesis, the elongation of the cis-3-decenoyl-ACP produced by FabA. This Haemophilus influenzae (strain ATCC 51907 / DSM 11121 / KW20 / Rd) protein is 3-oxoacyl-[acyl-carrier-protein] synthase 1 (fabB).